The following is a 189-amino-acid chain: GTP cyclohydrolase 1 (189 aa).

Zn(2+) contacts are provided by Cys-78, His-81, and Cys-150.

It belongs to the GTP cyclohydrolase I family. As to quaternary structure, toroid-shaped homodecamer, composed of two pentamers of five dimers.

It catalyses the reaction GTP + H2O = 7,8-dihydroneopterin 3'-triphosphate + formate + H(+). The protein operates within cofactor biosynthesis; 7,8-dihydroneopterin triphosphate biosynthesis; 7,8-dihydroneopterin triphosphate from GTP: step 1/1. This is GTP cyclohydrolase 1 from Listeria innocua serovar 6a (strain ATCC BAA-680 / CLIP 11262).